Consider the following 364-residue polypeptide: tRNA 2-selenouridine synthase (364 aa).

The region spanning 14–137 (LIADTPIIDV…LRQTAIQATI (124 aa)) is the Rhodanese domain. The S-selanylcysteine intermediate role is filled by Cys97.

This sequence belongs to the SelU family. Monomer.

The catalysed reaction is 5-methylaminomethyl-2-thiouridine(34) in tRNA + selenophosphate + (2E)-geranyl diphosphate + H2O + H(+) = 5-methylaminomethyl-2-selenouridine(34) in tRNA + (2E)-thiogeraniol + phosphate + diphosphate. It catalyses the reaction 5-methylaminomethyl-2-thiouridine(34) in tRNA + (2E)-geranyl diphosphate = 5-methylaminomethyl-S-(2E)-geranyl-thiouridine(34) in tRNA + diphosphate. It carries out the reaction 5-methylaminomethyl-S-(2E)-geranyl-thiouridine(34) in tRNA + selenophosphate + H(+) = 5-methylaminomethyl-2-(Se-phospho)selenouridine(34) in tRNA + (2E)-thiogeraniol. The enzyme catalyses 5-methylaminomethyl-2-(Se-phospho)selenouridine(34) in tRNA + H2O = 5-methylaminomethyl-2-selenouridine(34) in tRNA + phosphate. Functionally, involved in the post-transcriptional modification of the uridine at the wobble position (U34) of tRNA(Lys), tRNA(Glu) and tRNA(Gln). Catalyzes the conversion of 2-thiouridine (S2U-RNA) to 2-selenouridine (Se2U-RNA). Acts in a two-step process involving geranylation of 2-thiouridine (S2U) to S-geranyl-2-thiouridine (geS2U) and subsequent selenation of the latter derivative to 2-selenouridine (Se2U) in the tRNA chain. In Shigella dysenteriae serotype 1 (strain Sd197), this protein is tRNA 2-selenouridine synthase.